The sequence spans 243 residues: UPF0246 protein MGAS10750_Spy1880 (243 aa).

Belongs to the UPF0246 family.

The protein is UPF0246 protein MGAS10750_Spy1880 of Streptococcus pyogenes serotype M4 (strain MGAS10750).